The following is a 626-amino-acid chain: tRNA uridine 5-carboxymethylaminomethyl modification enzyme MnmG (626 aa).

13–18 is a binding site for FAD; the sequence is GGGHAG. 273–287 lines the NAD(+) pocket; that stretch reads GPRYCPSIEDKIHRF.

Belongs to the MnmG family. As to quaternary structure, homodimer. Heterotetramer of two MnmE and two MnmG subunits. The cofactor is FAD.

Its subcellular location is the cytoplasm. Functionally, NAD-binding protein involved in the addition of a carboxymethylaminomethyl (cmnm) group at the wobble position (U34) of certain tRNAs, forming tRNA-cmnm(5)s(2)U34. The protein is tRNA uridine 5-carboxymethylaminomethyl modification enzyme MnmG of Acinetobacter baumannii (strain AB307-0294).